Reading from the N-terminus, the 167-residue chain is MHTPKHAIQRISKEEMEFFEGRCERMGEADETMWGTKWCGSGNEATDISELGYWSNLDSCCRTHDHCDNIPSGQTKYGLTNEGKYTMMNCKCETAFEQCLRNVTGGMEGPAAGFVRKTYFDLYGNGCYNVQCPSQRRLARSEECPDGVATYTGEAGYGAWAINKLNG.

Trp38, Gly40, and Gly42 together coordinate Ca(2+). 5 disulfide bridges follow: Cys39/Cys61, Cys60/Cys99, Cys67/Cys92, Cys90/Cys127, and Cys132/Cys144. His64 is an active-site residue. Ca(2+) is bound at residue Asp65. Residue Asn102 is glycosylated (N-linked (GlcNAc...) asparagine). Positions 136 to 140 (RRLAR) are excised as a propeptide.

It belongs to the phospholipase A2 family. Group III subfamily. In terms of assembly, heterodimer composed of a large subunit and a small subunit; disulfide-linked. The cofactor is Ca(2+). Expressed by the venom gland.

Its subcellular location is the secreted. It catalyses the reaction a 1,2-diacyl-sn-glycero-3-phosphocholine + H2O = a 1-acyl-sn-glycero-3-phosphocholine + a fatty acid + H(+). Phospholipase toxin, which may catalyze the calcium-dependent hydrolysis of the 2-acyl groups in 3-sn-phosphoglycerides. Inhibits both skeletal (RYR1) and cardiac (RYR2) ryanodine receptors (calcium release channels). Probably blocks ryanodine receptors by generating a lipid product. The protein is Phospholipase A2 imperatoxin-1 of Pandinus imperator (Emperor scorpion).